A 240-amino-acid chain; its full sequence is UDP-2,3-diacylglucosamine hydrolase (240 aa).

5 residues coordinate Mn(2+): D8, H10, D41, N79, and H114. 79-80 (NR) is a substrate binding site. The substrate site is built by D122, S160, N164, K167, and H195. H195 and H197 together coordinate Mn(2+).

The protein belongs to the LpxH family. Mn(2+) is required as a cofactor.

The protein localises to the cell inner membrane. The catalysed reaction is UDP-2-N,3-O-bis[(3R)-3-hydroxytetradecanoyl]-alpha-D-glucosamine + H2O = 2-N,3-O-bis[(3R)-3-hydroxytetradecanoyl]-alpha-D-glucosaminyl 1-phosphate + UMP + 2 H(+). It functions in the pathway glycolipid biosynthesis; lipid IV(A) biosynthesis; lipid IV(A) from (3R)-3-hydroxytetradecanoyl-[acyl-carrier-protein] and UDP-N-acetyl-alpha-D-glucosamine: step 4/6. Hydrolyzes the pyrophosphate bond of UDP-2,3-diacylglucosamine to yield 2,3-diacylglucosamine 1-phosphate (lipid X) and UMP by catalyzing the attack of water at the alpha-P atom. Involved in the biosynthesis of lipid A, a phosphorylated glycolipid that anchors the lipopolysaccharide to the outer membrane of the cell. In Pectobacterium atrosepticum (strain SCRI 1043 / ATCC BAA-672) (Erwinia carotovora subsp. atroseptica), this protein is UDP-2,3-diacylglucosamine hydrolase.